An 81-amino-acid polypeptide reads, in one-letter code: MNREGAPGKSPEEMYIQQKVRVLLMLRKMGSNLTASEEEFLRTYAGVVNSQLSQLPPHSIDQGAEDVVMAFSRSETEDRRQ.

At Ser-59 the chain carries Phosphoserine.

Belongs to the CTNNBIP1 family. As to quaternary structure, binds CTNNB1.

Its subcellular location is the cytoplasm. It localises to the nucleus. In terms of biological role, prevents the interaction between CTNNB1 and TCF family members, and acts as a negative regulator of the Wnt signaling pathway. This Homo sapiens (Human) protein is Beta-catenin-interacting protein 1 (CTNNBIP1).